Reading from the N-terminus, the 334-residue chain is L-lactate dehydrogenase C chain (334 aa).

Residues 30–58 (GQVG…LEDK), Arg100, and Asn139 contribute to the NAD(+) site. Residues Asn139 and Arg170 each contribute to the substrate site. The Proton acceptor role is filled by His194. Thr249 lines the substrate pocket.

The protein belongs to the LDH/MDH superfamily. LDH family. In terms of assembly, homotetramer.

It is found in the cytoplasm. The enzyme catalyses (S)-lactate + NAD(+) = pyruvate + NADH + H(+). It functions in the pathway fermentation; pyruvate fermentation to lactate; (S)-lactate from pyruvate: step 1/1. This chain is L-lactate dehydrogenase C chain (ldhc), found in Xenopus laevis (African clawed frog).